Consider the following 215-residue polypeptide: Imidazole glycerol phosphate synthase subunit HisH (215 aa).

The region spanning 3-215 is the Glutamine amidotransferase type-1 domain; that stretch reads TAVVFDYGFG…QLLKNWIATL (213 aa). Cys81 functions as the Nucleophile in the catalytic mechanism. Catalysis depends on residues His196 and Glu198.

Heterodimer of HisH and HisF.

The protein localises to the cytoplasm. The enzyme catalyses 5-[(5-phospho-1-deoxy-D-ribulos-1-ylimino)methylamino]-1-(5-phospho-beta-D-ribosyl)imidazole-4-carboxamide + L-glutamine = D-erythro-1-(imidazol-4-yl)glycerol 3-phosphate + 5-amino-1-(5-phospho-beta-D-ribosyl)imidazole-4-carboxamide + L-glutamate + H(+). It carries out the reaction L-glutamine + H2O = L-glutamate + NH4(+). Its pathway is amino-acid biosynthesis; L-histidine biosynthesis; L-histidine from 5-phospho-alpha-D-ribose 1-diphosphate: step 5/9. IGPS catalyzes the conversion of PRFAR and glutamine to IGP, AICAR and glutamate. The HisH subunit catalyzes the hydrolysis of glutamine to glutamate and ammonia as part of the synthesis of IGP and AICAR. The resulting ammonia molecule is channeled to the active site of HisF. The polypeptide is Imidazole glycerol phosphate synthase subunit HisH (Bifidobacterium longum (strain NCC 2705)).